Consider the following 318-residue polypeptide: MASKSRHYLNQPWYIILFIFVLSLVAGTLLSSVSYVLSPIQKQAAEFDRNQQMLMAAQIISYDNKFQIYAEGDWQPAVYNTKKQILEKSSSTPPQVTVATLCSYFQNFVRVLLTDSQGNLSSFEDHNLNLEEFLSHPTSSVQDHSLHVIYAILANDESSKKLSSSQVAKNPVSIESIILPIKGFGLWGPIYGFLALEKDGNTVLGTCWYQHGETPGLGANITNPQWQQNFRGKKVFLASSSGETDFAKTTLGLEVIKGSVSALLGDSPKANSAVDGISGATLTCNGVTEAFANSLAPYRPLLTFFANLNSSGESHDNQ.

Residues 13-33 (WYIILFIFVLSLVAGTLLSSV) form a helical membrane-spanning segment. T281 carries the FMN phosphoryl threonine modification.

It belongs to the NqrC family. As to quaternary structure, composed of six subunits; NqrA, NqrB, NqrC, NqrD, NqrE and NqrF. It depends on FMN as a cofactor.

It is found in the cell inner membrane. The enzyme catalyses a ubiquinone + n Na(+)(in) + NADH + H(+) = a ubiquinol + n Na(+)(out) + NAD(+). Its function is as follows. NQR complex catalyzes the reduction of ubiquinone-1 to ubiquinol by two successive reactions, coupled with the transport of Na(+) ions from the cytoplasm to the periplasm. NqrA to NqrE are probably involved in the second step, the conversion of ubisemiquinone to ubiquinol. This chain is Na(+)-translocating NADH-quinone reductase subunit C, found in Chlamydia muridarum (strain MoPn / Nigg).